Reading from the N-terminus, the 237-residue chain is V-type proton ATPase subunit E3 (237 aa).

Met1 is modified (N-acetylmethionine). Residues 9–67 (QIQQMVRFIRQEAEEKANEISISSEEEFNIEKLQLVEAEKKKIRQEYEKKEKQVDVRKK) are a coiled coil.

The protein belongs to the V-ATPase E subunit family. As to quaternary structure, V-ATPase is a heteromultimeric enzyme composed of a peripheral catalytic V1 complex (components A to H) attached to an integral membrane V0 proton pore complex (components: a, c, c'', d and e).

The protein resides in the vacuole membrane. Functionally, subunit of the peripheral V1 complex of vacuolar ATPase essential for assembly or catalytic function. V-ATPase is responsible for acidifying a variety of intracellular compartments in eukaryotic cells. The protein is V-type proton ATPase subunit E3 (VHA-E3) of Arabidopsis thaliana (Mouse-ear cress).